We begin with the raw amino-acid sequence, 651 residues long: ATP synthase F(1) complex catalytic subunit beta, mitochondrial (651 aa).

The transit peptide at 1 to 30 (MFVARRLSKNITQISKTAVKTSVRAVPVRG) directs the protein to the mitochondrion. Gly-259, Val-260, Gly-261, Lys-262, Thr-263, and Val-264 together coordinate ADP. Gly-259 serves as a coordination point for ATP. Residues Gly-259, Val-260, Gly-261, Lys-262, and Thr-263 each coordinate phosphate. Residues Gly-261, Lys-262, Thr-263, and Val-264 each coordinate ATP. Thr-263 contributes to the Mg(2+) binding site. Position 288 (Glu-288) interacts with Mg(2+). Position 289 (Arg-289) interacts with ATP.

This sequence belongs to the ATPase alpha/beta chains family. Homotrimer. Component of the ATP synthase complex composed at least of ATP5F1A/subunit alpha, ATP5F1B/subunit beta, ATP5MC1/subunit c (homooctomer), MT-ATP6/subunit a, MT-ATP8/subunit 8, ATP5ME/subunit e, ATP5MF/subunit f, ATP5MG/subunit g, ATP5MK/subunit k, ATP5MJ/subunit j, ATP5F1C/subunit gamma, ATP5F1D/subunit delta, ATP5F1E/subunit epsilon, ATP5PF/subunit F6, ATP5PB/subunit b, ATP5PD/subunit d, ATP5PO/subunit OSCP. ATP synthase complex consists of a soluble F(1) head domain (subunits alpha(3) and beta(3)) - the catalytic core - and a membrane F(0) domain - the membrane proton channel (subunits c, a, 8, e, f, g, k and j). These two domains are linked by a central stalk (subunits gamma, delta, and epsilon) rotating inside the F1 region and a stationary peripheral stalk (subunits F6, b, d, and OSCP).

The protein localises to the mitochondrion inner membrane. The catalysed reaction is ATP + H2O + 4 H(+)(in) = ADP + phosphate + 5 H(+)(out). Its function is as follows. Catalytic subunit beta, of the mitochondrial membrane ATP synthase complex (F(1)F(0) ATP synthase or Complex V) that produces ATP from ADP in the presence of a proton gradient across the membrane which is generated by electron transport complexes of the respiratory chain. ATP synthase complex consist of a soluble F(1) head domain - the catalytic core - and a membrane F(1) domain - the membrane proton channel. These two domains are linked by a central stalk rotating inside the F(1) region and a stationary peripheral stalk. During catalysis, ATP synthesis in the catalytic domain of F(1) is coupled via a rotary mechanism of the central stalk subunits to proton translocation. In vivo, can only synthesize ATP although its ATP hydrolase activity can be activated artificially in vitro. With the subunit alpha (ATP5F1A), forms the catalytic core in the F(1) domain. This Dictyostelium discoideum (Social amoeba) protein is ATP synthase F(1) complex catalytic subunit beta, mitochondrial.